Here is a 135-residue protein sequence, read N- to C-terminus: ATP synthase epsilon chain (135 aa).

This sequence belongs to the ATPase epsilon chain family. As to quaternary structure, F-type ATPases have 2 components, CF(1) - the catalytic core - and CF(0) - the membrane proton channel. CF(1) has five subunits: alpha(3), beta(3), gamma(1), delta(1), epsilon(1). CF(0) has three main subunits: a, b and c.

It is found in the cell inner membrane. Functionally, produces ATP from ADP in the presence of a proton gradient across the membrane. This chain is ATP synthase epsilon chain, found in Rhizobium leguminosarum bv. trifolii (strain WSM2304).